The primary structure comprises 452 residues: Phosphoglucosamine mutase (452 aa).

The active-site Phosphoserine intermediate is the serine 108. The Mg(2+) site is built by serine 108, aspartate 247, aspartate 249, and aspartate 251. Serine 108 bears the Phosphoserine mark.

The protein belongs to the phosphohexose mutase family. Mg(2+) is required as a cofactor. Activated by phosphorylation.

It carries out the reaction alpha-D-glucosamine 1-phosphate = D-glucosamine 6-phosphate. Catalyzes the conversion of glucosamine-6-phosphate to glucosamine-1-phosphate. The protein is Phosphoglucosamine mutase of Burkholderia pseudomallei (strain K96243).